We begin with the raw amino-acid sequence, 329 residues long: 4-hydroxythreonine-4-phosphate dehydrogenase (329 aa).

Residues H136 and T137 each coordinate substrate. Residues H166, H211, and H266 each coordinate a divalent metal cation. Substrate-binding residues include K274, N283, and R292.

This sequence belongs to the PdxA family. As to quaternary structure, homodimer. Requires Zn(2+) as cofactor. Mg(2+) is required as a cofactor. The cofactor is Co(2+).

It localises to the cytoplasm. The enzyme catalyses 4-(phosphooxy)-L-threonine + NAD(+) = 3-amino-2-oxopropyl phosphate + CO2 + NADH. The protein operates within cofactor biosynthesis; pyridoxine 5'-phosphate biosynthesis; pyridoxine 5'-phosphate from D-erythrose 4-phosphate: step 4/5. Functionally, catalyzes the NAD(P)-dependent oxidation of 4-(phosphooxy)-L-threonine (HTP) into 2-amino-3-oxo-4-(phosphooxy)butyric acid which spontaneously decarboxylates to form 3-amino-2-oxopropyl phosphate (AHAP). This chain is 4-hydroxythreonine-4-phosphate dehydrogenase, found in Shigella boydii serotype 4 (strain Sb227).